A 602-amino-acid chain; its full sequence is Threonine--tRNA ligase (602 aa).

The tract at residues 208 to 499 (DHRKLGTELK…LTEHCAGEFP (292 aa)) is catalytic. Zn(2+) is bound by residues C300, H351, and H476.

It belongs to the class-II aminoacyl-tRNA synthetase family. In terms of assembly, homodimer. It depends on Zn(2+) as a cofactor.

The protein localises to the cytoplasm. It catalyses the reaction tRNA(Thr) + L-threonine + ATP = L-threonyl-tRNA(Thr) + AMP + diphosphate + H(+). Catalyzes the attachment of threonine to tRNA(Thr) in a two-step reaction: L-threonine is first activated by ATP to form Thr-AMP and then transferred to the acceptor end of tRNA(Thr). Also edits incorrectly charged L-seryl-tRNA(Thr). In Campylobacter jejuni subsp. jejuni serotype O:2 (strain ATCC 700819 / NCTC 11168), this protein is Threonine--tRNA ligase.